We begin with the raw amino-acid sequence, 644 residues long: Arginine--tRNA ligase (644 aa).

Positions 129–139 (ANPIHPLHLGH) match the 'HIGH' region motif.

Belongs to the class-I aminoacyl-tRNA synthetase family.

Its subcellular location is the cytoplasm. It carries out the reaction tRNA(Arg) + L-arginine + ATP = L-arginyl-tRNA(Arg) + AMP + diphosphate. The sequence is that of Arginine--tRNA ligase (argS) from Aeropyrum pernix (strain ATCC 700893 / DSM 11879 / JCM 9820 / NBRC 100138 / K1).